Consider the following 144-residue polypeptide: Austinoid biosynthesis cluster protein S (144 aa).

The protein belongs to the trt14 isomerase family. In terms of assembly, homodimer.

Its pathway is secondary metabolite biosynthesis; terpenoid biosynthesis. Part of the gene cluster that mediates the biosynthesis of calidodehydroaustin, a fungal meroterpenoid. The first step of the pathway is the synthesis of 3,5-dimethylorsellinic acid by the polyketide synthase ausA. 3,5-dimethylorsellinic acid is then prenylated by the polyprenyl transferase ausN. Further epoxidation by the FAD-dependent monooxygenase ausM and cyclization by the probable terpene cyclase ausL lead to the formation of protoaustinoid A. Protoaustinoid A is then oxidized to spiro-lactone preaustinoid A3 by the combined action of the FAD-binding monooxygenases ausB and ausC, and the dioxygenase ausE. Acid-catalyzed keto-rearrangement and ring contraction of the tetraketide portion of preaustinoid A3 by ausJ lead to the formation of preaustinoid A4. The aldo-keto reductase ausK, with the help of ausH, is involved in the next step by transforming preaustinoid A4 into isoaustinone which is in turn hydroxylated by the P450 monooxygenase ausI to form austinolide. The cytochrome P450 monooxygenase ausG modifies austinolide to austinol. Austinol is further acetylated to austin by the O-acetyltransferase ausP, which spontaneously changes to dehydroaustin. The cytochrome P450 monooxygenase ausR then converts dehydroaustin is into 7-dehydrodehydroaustin. The hydroxylation catalyzed by ausR permits the O-acetyltransferase ausQ to add an additional acetyl group to the molecule, leading to the formation of acetoxydehydroaustin. The short chain dehydrogenase ausT catalyzes the reduction of the double bond present between carbon atoms 1 and 2 to convert 7-dehydrodehydroaustin into 1,2-dihydro-7-hydroxydehydroaustin. AusQ catalyzes not only an acetylation reaction but also the addition of the PKS ausV diketide product to 1,2-dihydro-7-hydroxydehydroaustin, forming precalidodehydroaustin. Finally, the iron/alpha-ketoglutarate-dependent dioxygenase converts precalidodehydroaustin into calidodehydroaustin. AusS is necessary for austinoids production and may play a possible function as a regulator. In terms of biological role, may play a possible function as a regulator. The protein is Austinoid biosynthesis cluster protein S of Aspergillus calidoustus.